The primary structure comprises 792 residues: Probable exo-1,4-beta-xylosidase xlnD (792 aa).

The N-terminal stretch at 1 to 20 (MSVAKSIAAVLVALLPGALA) is a signal peptide. 5 N-linked (GlcNAc...) asparagine glycosylation sites follow: Asn23, Asn87, Asn118, Asn142, and Asn246. Residue Asp310 is part of the active site. Asn326, Asn385, Asn404, Asn440, Asn477, Asn518, Asn679, and Asn701 each carry an N-linked (GlcNAc...) asparagine glycan.

The protein belongs to the glycosyl hydrolase 3 family.

It localises to the secreted. The catalysed reaction is Hydrolysis of (1-&gt;4)-beta-D-xylans, to remove successive D-xylose residues from the non-reducing termini.. It functions in the pathway glycan degradation; xylan degradation. Its function is as follows. Xylan 1,4-beta-xylosidase involved in the hydrolysis of xylan, a major structural heterogeneous polysaccharide found in plant biomass representing the second most abundant polysaccharide in the biosphere, after cellulose. The protein is Probable exo-1,4-beta-xylosidase xlnD (xlnD) of Aspergillus fumigatus (strain ATCC MYA-4609 / CBS 101355 / FGSC A1100 / Af293) (Neosartorya fumigata).